A 363-amino-acid polypeptide reads, in one-letter code: 3-dehydroquinate synthase (363 aa).

NAD(+)-binding positions include 72–77 (SGEKEK), 130–131 (TT), Lys-142, and Lys-151. Zn(2+) contacts are provided by Glu-184, His-247, and His-264.

The protein belongs to the sugar phosphate cyclases superfamily. Dehydroquinate synthase family. The cofactor is Co(2+). It depends on Zn(2+) as a cofactor. Requires NAD(+) as cofactor.

The protein localises to the cytoplasm. It catalyses the reaction 7-phospho-2-dehydro-3-deoxy-D-arabino-heptonate = 3-dehydroquinate + phosphate. The protein operates within metabolic intermediate biosynthesis; chorismate biosynthesis; chorismate from D-erythrose 4-phosphate and phosphoenolpyruvate: step 2/7. Its function is as follows. Catalyzes the conversion of 3-deoxy-D-arabino-heptulosonate 7-phosphate (DAHP) to dehydroquinate (DHQ). The polypeptide is 3-dehydroquinate synthase (Bacillus thuringiensis (strain Al Hakam)).